The primary structure comprises 334 residues: Ornithine carbamoyltransferase (334 aa).

Carbamoyl phosphate-binding positions include 56-59, Gln83, Arg107, and 134-137; these read STRT and HPTQ. L-ornithine is bound by residues Asn168, Asp232, and 236-237; that span reads SM. Residues 274-275 and Arg320 contribute to the carbamoyl phosphate site; that span reads CL.

This sequence belongs to the aspartate/ornithine carbamoyltransferase superfamily. OTCase family.

The protein localises to the cytoplasm. It carries out the reaction carbamoyl phosphate + L-ornithine = L-citrulline + phosphate + H(+). It participates in amino-acid biosynthesis; L-arginine biosynthesis; L-arginine from L-ornithine and carbamoyl phosphate: step 1/3. Its function is as follows. Reversibly catalyzes the transfer of the carbamoyl group from carbamoyl phosphate (CP) to the N(epsilon) atom of ornithine (ORN) to produce L-citrulline. This is Ornithine carbamoyltransferase from Escherichia coli O157:H7.